The following is a 117-amino-acid chain: DNA-directed RNA polymerase subunit omega (117 aa).

Belongs to the RNA polymerase subunit omega family. The RNAP catalytic core consists of 2 alpha, 1 beta, 1 beta' and 1 omega subunit. When a sigma factor is associated with the core the holoenzyme is formed, which can initiate transcription.

It catalyses the reaction RNA(n) + a ribonucleoside 5'-triphosphate = RNA(n+1) + diphosphate. Its function is as follows. Promotes RNA polymerase assembly. Latches the N- and C-terminal regions of the beta' subunit thereby facilitating its interaction with the beta and alpha subunits. The polypeptide is DNA-directed RNA polymerase subunit omega (Cereibacter sphaeroides (strain ATCC 17029 / ATH 2.4.9) (Rhodobacter sphaeroides)).